Reading from the N-terminus, the 143-residue chain is Large ribosomal subunit protein uL13 (143 aa).

The protein belongs to the universal ribosomal protein uL13 family. In terms of assembly, part of the 50S ribosomal subunit.

This protein is one of the early assembly proteins of the 50S ribosomal subunit, although it is not seen to bind rRNA by itself. It is important during the early stages of 50S assembly. The protein is Large ribosomal subunit protein uL13 of Neisseria meningitidis serogroup C (strain 053442).